Here is a 188-residue protein sequence, read N- to C-terminus: UPF0314 protein Sala_3154 (188 aa).

The next 3 helical transmembrane spans lie at 8-28 (TGWL…IFMG), 57-77 (WYSF…RWIM), and 143-163 (MRWW…LWTI).

This sequence belongs to the UPF0314 family.

Its subcellular location is the cell membrane. This is UPF0314 protein Sala_3154 from Sphingopyxis alaskensis (strain DSM 13593 / LMG 18877 / RB2256) (Sphingomonas alaskensis).